A 781-amino-acid chain; its full sequence is MRFKNVKKTALMLAMFGMATSSNAALFDYNATGDTEFDSPAKQGWMQDNTNNGSGVLTNADGMPAWLVQGIGGRAQWTYSLSTNQHAQASSFGWRMTTEMKVLSGGMITNYYANGTQRVLPIISLDSSGNLVVEFEGQTGRTVLATGTAATEYHKFELVFLPGSNPSASFYFDGKLIRDNIQPTASKQNMIVWGNGSSNTDGVAAYRDIKFEIQGDVIFRGPDRIPSIVASSVTPGVVTAFAEKRVGGGDPGALSNTNDIITRTSRDGGITWDTELNLTEQINVSDEFDFSDPRPIYDPSSNTVLVSYARWPTDAAQNGDRIKPWMPNGIFYSVYDVASGNWQAPIDVTDQVKERSFQIAGWGGSELYRRNTSLNSQQDWQSNAKIRIVDGAANQIQVADGSRKYVVTLSIDESGGLVANLNGVSAPIILQSEHAKVHSFHDYELQYSALNHTTTLFVDGQQITTWAGEVSQENNIQFGNADAQIDGRLHVQKIVLTQQGHNLVEFDAFYLAQQTPEVEKDLEKLGWTKIKTGNTMSLYGNASVNPGPGHGITLTRQQNISGSQNGRLIYPAIVLDRFFLNVMSIYSDDGGSNWQTGSTLPIPFRWKSSSILETLEPSEADMVELQNGDLLLTARLDFNQIVNGVNYSPRQQFLSKDGGITWSLLEANNANVFSNISTGTVDASITRFEQSDGSHFLLFTNPQGNPAGTNGRQNLGLWFSFDEGVTWKGPIQLVNGASAYSDIYQLDSENAIVIVETDNSNMRILRMPITLLKQKLTLSQN.

The first 24 residues, 1–24 (MRFKNVKKTALMLAMFGMATSSNA), serve as a signal peptide directing secretion. Arg-224 serves as a coordination point for substrate. Asp-250 functions as the Proton acceptor in the catalytic mechanism. 2 BNR repeats span residues 263–274 (RTSRDGGITWDT) and 585–596 (IYSDDGGSNWQT). Residue Glu-619 is part of the active site. Arg-635 provides a ligand contact to substrate. One copy of the BNR 3 repeat lies at 653–664 (FLSKDGGITWSL). Position 712 (Arg-712) interacts with substrate. Residues 718–729 (WFSFDEGVTWKG) form a BNR 4 repeat. Tyr-740 acts as the Nucleophile in catalysis.

The protein belongs to the glycosyl hydrolase 33 family. In terms of assembly, monomer. Ca(2+) serves as cofactor.

Its subcellular location is the secreted. It carries out the reaction Hydrolysis of alpha-(2-&gt;3)-, alpha-(2-&gt;6)-, alpha-(2-&gt;8)- glycosidic linkages of terminal sialic acid residues in oligosaccharides, glycoproteins, glycolipids, colominic acid and synthetic substrates.. Cleaves the terminal sialic acid (N-acetyl neuraminic acid) from carbohydrate chains in glycoproteins providing free sialic acid which can be used as carbon and energy sources. Sialidases have been suggested to be pathogenic factors in microbial infections. Facilitates cholera toxin binding to host intestinal epithelial cells by converting cell surface polysialogangliosides to GM1 monogangliosides. In Vibrio cholerae serotype O1 (strain ATCC 39541 / Classical Ogawa 395 / O395), this protein is Sialidase (nanH).